Reading from the N-terminus, the 277-residue chain is Ribosomally synthesized cyclic peptide asperipin-2a precursor aprA (277 aa).

A signal peptide spans 1–19; it reads MHLSRYIAVLLSASSFVSA. Propeptides lie at residues 20–69, 76–88, 95–107, 114–126, 133–145, 152–164, 171–183, 190–202, 209–221, 228–240, 247–259, and 266–277; these read LPLQ…LDKR, KRNAETPEDLDKR, KRNAETPDDLDKR, and KRNAETPEDLDK.

AprA is processed by kexin proteases to produce 11 identical copies of the hexapeptide Phe-Tyr-Tyr-Thr-Gly-Tyr, that is further modified aprY and aprR to yield asperipin-2a. The bicyclic structure of asperipin-2a is likely synthesized by the single ustYa family oxidase aprY. The reductase aprR may be required for the final reduction to yield asperipin-2a.

It participates in secondary metabolite biosynthesis. Functionally, ribosomally synthesized cyclic peptide asperipin-2a precursor; part of the gene cluster that mediates the biosynthesis of the asperipin-2a, a bicyclic peptide that possesses two macrocyclic ether rings consisting of 14- and 17-membered paracyclophans. The aprA translated product contains a 11-fold repeated peptide embedding the hexapeptide Phe-Tyr-Tyr-Thr-Gly-Tyr, that is converted into asperipin-2a. After being excised from the precursor peptide by kexin proteases, the core peptides are cyclized and modified post-translationally by enzymes encoded within the corresponding gene cluster. This Aspergillus flavus (strain ATCC 200026 / FGSC A1120 / IAM 13836 / NRRL 3357 / JCM 12722 / SRRC 167) protein is Ribosomally synthesized cyclic peptide asperipin-2a precursor aprA.